Reading from the N-terminus, the 281-residue chain is DegV domain-containing protein (281 aa).

The DegV domain occupies 3–280 (WKIVSDSGCD…EGGLLMGYEI (278 aa)). Residues Ser-63 and Ser-91 each coordinate hexadecanoate.

In terms of biological role, may bind long-chain fatty acids, such as palmitate, and may play a role in lipid transport or fatty acid metabolism. The chain is DegV domain-containing protein from Streptococcus gordonii.